The primary structure comprises 3750 residues: Cubilin homolog (3750 aa).

A signal peptide spans 1-28; that stretch reads MEGAARSRLLLCWTLLAIITDTWPIAEG. N-linked (GlcNAc...) asparagine glycans are attached at residues Asn-51 and Asn-123. Positions 154–190 constitute an EGF-like 1 domain; that stretch reads EANSCASGPCENGGTCYNTYTGFRCQCRSAFEGTKCE. Cystine bridges form between Cys-158–Cys-169, Cys-163–Cys-178, Cys-180–Cys-189, Cys-196–Cys-212, Cys-206–Cys-221, and Cys-223–Cys-232. Positions 192-233 constitute an EGF-like 2; calcium-binding domain; sequence DVNECALYEGTDLGCQNGGQCQNHFGTYSCLCQPGWHGMHCT. An EGF-like 3; calcium-binding domain is found at 282–308; it reads DVDECSDSAAHKPCSTSCINLPGSFTC. Residues 324 to 352 enclose the EGF-like 4; calcium-binding domain; it reads DLDECQTNNGGCSLSPKVDCINTYGSYHC. The N-linked (GlcNAc...) asparagine glycan is linked to Asn-424. EGF-like domains follow at residues 426–463 and 465–503; these read TTTN…PICE and QPSP…RLCE. Intrachain disulfides connect Cys-430/Cys-441, Cys-435/Cys-451, Cys-453/Cys-462, Cys-469/Cys-480, Cys-474/Cys-491, Cys-493/Cys-502, and Cys-509/Cys-535. Asn-448 is a glycosylation site (N-linked (GlcNAc...) asparagine). 13 CUB domains span residues 509–623, 627–738, 744–852, 853–971, 978–1095, 1100–1212, 1216–1331, 1332–1434, 1439–1550, 1554–1670, 1671–1788, 1792–1902, and 1903–2001; these read CNGM…WNSM, CGGR…YSVE, CGGV…YRMA, CDYK…YRAL, CGGV…YTFE, CGGH…WRIF, CGGS…YKAN, CIRN…QLDY, CMEE…YRTV, CGGK…FHES, CGQT…YMTM, CGSI…YNYE, and HHNE…WNRL. N-linked (GlcNAc...) asparagine glycans are attached at residues Asn-542 and Asn-548. Cys-562 and Cys-584 are oxidised to a cystine. Residue Asn-609 is glycosylated (N-linked (GlcNAc...) asparagine). 6 disulfides stabilise this stretch: Cys-627-Cys-654, Cys-681-Cys-701, Cys-744-Cys-770, Cys-853-Cys-879, Cys-913-Cys-933, and Cys-978-Cys-1004. The N-linked (GlcNAc...) asparagine glycan is linked to Asn-871. Ca(2+) contacts are provided by Glu-1026, Asp-1034, and Asp-1080. Residues Cys-1031 and Cys-1058 are joined by a disulfide bond. Cys-1100 and Cys-1126 are joined by a disulfide. Asn-1119 carries an N-linked (GlcNAc...) asparagine glycan. A Ca(2+)-binding site is contributed by Glu-1148. N-linked (GlcNAc...) asparagine glycosylation occurs at Asn-1152. Cys-1153 and Cys-1175 are joined by a disulfide. Ca(2+) contacts are provided by Asp-1156 and Asp-1197. Residues Cys-1216 and Cys-1242 are joined by a disulfide bond. Ca(2+)-binding residues include Glu-1264, Asp-1272, and Asp-1316. A disulfide bond links Cys-1269 and Cys-1292. Cysteines 1332 and 1360 form a disulfide. N-linked (GlcNAc...) asparagine glycans are attached at residues Asn-1335, Asn-1359, Asn-1413, and Asn-1424. Cys-1439 and Cys-1465 form a disulfide bridge. N-linked (GlcNAc...) asparagine glycosylation is present at Asn-1491. Cystine bridges form between Cys-1492–Cys-1513, Cys-1554–Cys-1580, Cys-1607–Cys-1631, Cys-1671–Cys-1697, Cys-1733–Cys-1755, Cys-1792–Cys-1818, and Cys-1845–Cys-1866. Asn-1694 is a glycosylation site (N-linked (GlcNAc...) asparagine). N-linked (GlcNAc...) asparagine glycosylation is found at Asn-1908 and Asn-2009. 2 disulfides stabilise this stretch: Cys-2019–Cys-2048 and Cys-2077–Cys-2100. 5 CUB domains span residues 2019–2139, 2140–2256, 2262–2383, 2385–2512, and 2516–2646; these read CGNQ…VRTA, CGSE…FRFE, DSGR…LSVA, CGGS…YTSL, and CGET…MNEV. 4 N-linked (GlcNAc...) asparagine glycosylation sites follow: Asn-2092, Asn-2128, Asn-2152, and Asn-2231. Cys-2140 and Cys-2167 are disulfide-bonded. Cys-2324 and Cys-2346 are disulfide-bonded. An N-linked (GlcNAc...) asparagine glycan is attached at Asn-2377. A disulfide bond links Cys-2385 and Cys-2416. A glycan (N-linked (GlcNAc...) asparagine) is linked at Asn-2442. 2 cysteine pairs are disulfide-bonded: Cys-2445–Cys-2474 and Cys-2516–Cys-2542. N-linked (GlcNAc...) asparagine glycans are attached at residues Asn-2655, Asn-2671, Asn-2682, and Asn-2772. 2 disulfide bridges follow: Cys-2761–Cys-2790 and Cys-2837–Cys-2859. 8 CUB domains span residues 2761–2895, 2898–3010, 3011–3128, 3130–3246, 3249–3364, 3368–3512, 3522–3615, and 3623–3736; these read CGGV…IKYG, CGGK…FERN, CGGL…YTSR, CGGI…VRVM, CDEK…INAI, CGSS…VALN, LQGR…YLAS, and CGGQ…FAGV. N-linked (GlcNAc...) asparagine glycans are attached at residues Asn-2885 and Asn-2889. 2 cysteine pairs are disulfide-bonded: Cys-2898–Cys-2921 and Cys-2949–Cys-2973. 3 N-linked (GlcNAc...) asparagine glycosylation sites follow: Asn-2960, Asn-2965, and Asn-2982. An intrachain disulfide couples Cys-3011 to Cys-3039. 2 N-linked (GlcNAc...) asparagine glycosylation sites follow: Asn-3040 and Asn-3074. Intrachain disulfides connect Cys-3070-Cys-3092 and Cys-3130-Cys-3157. An N-linked (GlcNAc...) asparagine glycan is attached at Asn-3160. Intrachain disulfides connect Cys-3184/Cys-3207, Cys-3249/Cys-3278, Cys-3305/Cys-3327, and Cys-3368/Cys-3402. N-linked (GlcNAc...) asparagine glycosylation is present at Asn-3256. A glycan (N-linked (GlcNAc...) asparagine) is linked at Asn-3427. A disulfide bridge links Cys-3430 with Cys-3475. 3 N-linked (GlcNAc...) asparagine glycosylation sites follow: Asn-3543, Asn-3572, and Asn-3645. Intrachain disulfides connect Cys-3560–Cys-3579, Cys-3623–Cys-3649, and Cys-3676–Cys-3699.

As to expression, specifically expressed in nephrocytes.

The protein resides in the cell membrane. In terms of biological role, required in the nephrocyte for normal uptake of proteins and elimination of toxins, and for maintenance of endocytic trafficking structures. May function together with Amnionless. In Drosophila melanogaster (Fruit fly), this protein is Cubilin homolog.